Reading from the N-terminus, the 194-residue chain is HTH-type nicotine-responsive transcriptional repressor HdnoR (194 aa).

In terms of domain architecture, HTH tetR-type spans 6 to 66 (VDRRQQLIDA…AAAAELLQQL (61 aa)). The H-T-H motif DNA-binding region spans 29–48 (SLRTIASEAKASLAAVHVCF).

In terms of assembly, homodimer.

6-hydroxy-D-nicotine and 6-hydroxy-L-nicotine prevent HdnoR from binding to the IR1 DNA. Both 6-hydroxy-nicotine enantiomers prevent DNA-protein complex formation at micromolar concentrations, with the D-enantiomer being twice as potent as the L-enantiomer. A thousand-fold higher L-nicotine concentration is required to elicit a similar effect. In terms of biological role, represses expression of the 6-hydroxy-D-nicotine oxidase (6-hdno). Acts by binding to a gene operator site consisting of two inverted repeats, IR1 (covering the 6-hdno promoter region) and IR2 (situated upstream from the 6-hdno promoter). Binding to one site may stimulate binding of the protein to the second site. This is HTH-type nicotine-responsive transcriptional repressor HdnoR from Paenarthrobacter nicotinovorans (Arthrobacter nicotinovorans).